Consider the following 325-residue polypeptide: D-alanine--D-alanine ligase (325 aa).

In terms of domain architecture, ATP-grasp spans 121 to 316 (KYVFEGCGLP…FEELVVRILR (196 aa)). Residue 147–202 (VAALGTPLSVKPAHEGSSIGIRKVNSAAELAEAYEAAARLDDLVLVEQWIEGPEFT) participates in ATP binding. Aspartate 270, glutamate 283, and asparagine 285 together coordinate Mg(2+).

It belongs to the D-alanine--D-alanine ligase family. Mg(2+) serves as cofactor. The cofactor is Mn(2+).

The protein resides in the cytoplasm. It carries out the reaction 2 D-alanine + ATP = D-alanyl-D-alanine + ADP + phosphate + H(+). It functions in the pathway cell wall biogenesis; peptidoglycan biosynthesis. In terms of biological role, cell wall formation. In Marinobacter nauticus (strain ATCC 700491 / DSM 11845 / VT8) (Marinobacter aquaeolei), this protein is D-alanine--D-alanine ligase.